A 512-amino-acid polypeptide reads, in one-letter code: Hyaluronidase PH-20 (512 aa).

The N-terminal stretch at 1–35 is a signal peptide; the sequence is MGELQFKWLFWRSFAESGGTFQTVLIFLFIPYSLT. Intrachain disulfides connect cysteine 60–cysteine 351 and cysteine 223–cysteine 237. Asparagine 63 carries an N-linked (GlcNAc...) asparagine glycan. Glutamate 147 (proton donor) is an active-site residue. N-linked (GlcNAc...) asparagine glycans are attached at residues asparagine 165 and asparagine 179. Asparagine 368 is a glycosylation site (N-linked (GlcNAc...) asparagine). Disulfide bonds link cysteine 376–cysteine 387, cysteine 381–cysteine 435, and cysteine 437–cysteine 464. Asparagine 408 carries an N-linked (GlcNAc...) asparagine glycan.

Belongs to the glycosyl hydrolase 56 family.

Its subcellular location is the cell membrane. It carries out the reaction Random hydrolysis of (1-&gt;4)-linkages between N-acetyl-beta-D-glucosamine and D-glucuronate residues in hyaluronate.. Involved in sperm-egg adhesion. Upon fertilization sperm must first penetrate a layer of cumulus cells that surrounds the egg before reaching the zona pellucida. The cumulus cells are embedded in a matrix containing hyaluronic acid which is formed prior to ovulation. This protein aids in penetrating the layer of cumulus cells by digesting hyaluronic acid. The sequence is that of Hyaluronidase PH-20 (Spam1) from Rattus norvegicus (Rat).